The following is a 210-amino-acid chain: N-(5'-phosphoribosyl)anthranilate isomerase (210 aa).

This sequence belongs to the TrpF family.

The enzyme catalyses N-(5-phospho-beta-D-ribosyl)anthranilate = 1-(2-carboxyphenylamino)-1-deoxy-D-ribulose 5-phosphate. Its pathway is amino-acid biosynthesis; L-tryptophan biosynthesis; L-tryptophan from chorismate: step 3/5. The polypeptide is N-(5'-phosphoribosyl)anthranilate isomerase (Pseudomonas fluorescens (strain SBW25)).